The following is a 293-amino-acid chain: Ribosomal protein L11 methyltransferase (293 aa).

S-adenosyl-L-methionine is bound by residues Thr-145, Gly-166, Asp-188, and Asn-230.

This sequence belongs to the methyltransferase superfamily. PrmA family.

The protein localises to the cytoplasm. The enzyme catalyses L-lysyl-[protein] + 3 S-adenosyl-L-methionine = N(6),N(6),N(6)-trimethyl-L-lysyl-[protein] + 3 S-adenosyl-L-homocysteine + 3 H(+). Functionally, methylates ribosomal protein L11. This chain is Ribosomal protein L11 methyltransferase, found in Shewanella halifaxensis (strain HAW-EB4).